A 285-amino-acid chain; its full sequence is Acetylglutamate kinase (285 aa).

Substrate contacts are provided by residues 55-56 (GG), Arg-77, and Asn-171.

The protein belongs to the acetylglutamate kinase family. ArgB subfamily.

Its subcellular location is the cytoplasm. The enzyme catalyses N-acetyl-L-glutamate + ATP = N-acetyl-L-glutamyl 5-phosphate + ADP. The protein operates within amino-acid biosynthesis; L-arginine biosynthesis; N(2)-acetyl-L-ornithine from L-glutamate: step 2/4. Catalyzes the ATP-dependent phosphorylation of N-acetyl-L-glutamate. The chain is Acetylglutamate kinase from Chlorobaculum tepidum (strain ATCC 49652 / DSM 12025 / NBRC 103806 / TLS) (Chlorobium tepidum).